A 45-amino-acid chain; its full sequence is Psychimicin (45 aa).

3 disulfides stabilise this stretch: C10-C24, C14-C36, and C25-C42.

As to quaternary structure, monomer. Hemolymph.

The protein localises to the secreted. Its function is as follows. Has antimicrobial activity. Is particularly active against fungi, and to a lesser extent against Gram-positive and Gram-negative bacteria. This chain is Psychimicin, found in Oiketicus kirbyi (Bagworm moth).